Here is a 556-residue protein sequence, read N- to C-terminus: Polypeptide N-acetylgalactosaminyltransferase 13 (556 aa).

Over 1–4 (MRRF) the chain is Cytoplasmic. Residues 5–27 (VYCKVVLATSLMWVLVDVFLLLY) form a helical; Signal-anchor for type II membrane protein membrane-spanning segment. Residues 28-556 (FSECNKCDDK…WLLRNMTLGT (529 aa)) lie on the Lumenal side of the membrane. Residues asparagine 94 and asparagine 116 are each glycosylated (N-linked (GlcNAc...) asparagine). 5 disulfides stabilise this stretch: cysteine 105–cysteine 338, cysteine 329–cysteine 407, cysteine 441–cysteine 458, cysteine 481–cysteine 496, and cysteine 522–cysteine 539. The tract at residues 114–224 (LPNTSVVIVF…LGWLEPLLAR (111 aa)) is catalytic subdomain A. Positions 155 and 185 each coordinate substrate. Mn(2+) contacts are provided by aspartate 208 and histidine 210. Residues 284–346 (PVRTPTMAGG…TCSHVGHVFR (63 aa)) are catalytic subdomain B. Tryptophan 315 is a binding site for substrate. Residue histidine 343 participates in Mn(2+) binding. Arginine 346 and tyrosine 351 together coordinate substrate. Residues 428–550 (YSLGEIRNVE…GSRSQQWLLR (123 aa)) form the Ricin B-type lectin domain. A glycan (N-linked (GlcNAc...) asparagine) is linked at asparagine 551.

It belongs to the glycosyltransferase 2 family. GalNAc-T subfamily. Mn(2+) serves as cofactor. In terms of tissue distribution, specifically expressed in neuronal cells. Not expressed in glial cells such as astrocytes. Expressed at low level.

The protein resides in the golgi apparatus membrane. The enzyme catalyses L-seryl-[protein] + UDP-N-acetyl-alpha-D-galactosamine = a 3-O-[N-acetyl-alpha-D-galactosaminyl]-L-seryl-[protein] + UDP + H(+). It carries out the reaction L-threonyl-[protein] + UDP-N-acetyl-alpha-D-galactosamine = a 3-O-[N-acetyl-alpha-D-galactosaminyl]-L-threonyl-[protein] + UDP + H(+). It participates in protein modification; protein glycosylation. Its function is as follows. Catalyzes the initial reaction in O-linked oligosaccharide biosynthesis, the transfer of an N-acetyl-D-galactosamine (GalNAc) residue from UDP-GalNAc to a serine or threonine residue on the protein receptor. Generates GalNAc-O-Ser/Thr structure also known as Tn antigen, which itself is immunogenic but also serves as a precursor for the synthesis of different mucin-type O-glycan core structures. Contributes to the synthesis of O-linked glycans on mucins and proteoglycans of the central nervous system. Can glycosylate both unmodified peptides and glycopeptides that already contain an O-linked GalNAc sugar. Transfers GalNAc to Thr-/Ser-rich tandem repeats GTTPSPVPTTSTTSAP of MUC5AC. Transfers GalNAc to three consecutive serine/threonine residues on SDC3 forming a triplet-Tn epitope expressed in Purkinje cells of the developing brain. May promote neurogenesis through glycosylation and stabilization of PDPN. The protein is Polypeptide N-acetylgalactosaminyltransferase 13 (Galnt13) of Mus musculus (Mouse).